The chain runs to 340 residues: Glycerol-3-phosphate dehydrogenase [NAD(P)+] (340 aa).

Ser-11, Trp-12, Arg-33, and Lys-106 together coordinate NADPH. Lys-106, Gly-137, and Ser-139 together coordinate sn-glycerol 3-phosphate. Residue Ala-141 participates in NADPH binding. Sn-glycerol 3-phosphate is bound by residues Lys-192, Asp-245, Ser-255, Arg-256, and Asn-257. Lys-192 serves as the catalytic Proton acceptor. Arg-256 is an NADPH binding site. NADPH is bound by residues Val-280 and Glu-282.

Belongs to the NAD-dependent glycerol-3-phosphate dehydrogenase family.

Its subcellular location is the cytoplasm. It catalyses the reaction sn-glycerol 3-phosphate + NAD(+) = dihydroxyacetone phosphate + NADH + H(+). The enzyme catalyses sn-glycerol 3-phosphate + NADP(+) = dihydroxyacetone phosphate + NADPH + H(+). It participates in membrane lipid metabolism; glycerophospholipid metabolism. Functionally, catalyzes the reduction of the glycolytic intermediate dihydroxyacetone phosphate (DHAP) to sn-glycerol 3-phosphate (G3P), the key precursor for phospholipid synthesis. The chain is Glycerol-3-phosphate dehydrogenase [NAD(P)+] from Bacillus cereus (strain 03BB102).